The primary structure comprises 271 residues: Short chain dehydrogenase virK (271 aa).

The NADP(+) site is built by L13, D59, N87, Y168, K172, V201, and T203. Catalysis depends on Y168, which acts as the Proton donor. K172 (lowers pKa of active site Tyr) is an active-site residue.

This sequence belongs to the short-chain dehydrogenases/reductases (SDR) family.

Its pathway is secondary metabolite biosynthesis. Functionally, short chain dehydrogenase; part of the gene cluster that mediates the biosynthesis of virensols and trichoxide, fungal natural products that contain or are derived from a salicylaldehyde core. The pathway begins with the synthesis of the reduced chain in virensol C by the highly reducing polyketide synthase virA via condensation of one acetate and 8 malonate units. VirA has interesting programming rules since the first 2 ketides are fully reduced, the 3 following ketides undergo beta-dehydration, and the last 3 ketides are only reduced to beta-hydroxys to yield the trihydroxy portion. The production of aldehyde virensol C by virA alone is surprising, since virA does not contain a reductase (R) domain that is typically associated with reductive product release in HRPKS. The cupin-domain enzyme virC is involved in enhancing virA product turnover. The short-chain dehydrogenase virB then oxidizes the C-7 alcohol of virensol C to a ketone, yielding virensol D. Virensol D is further transformed to salicylaldehyde 5-deoxyaurocitrin by the short-chain dehydrogenase virD. VirD catalyzes the dehydrogenation of C-3 to form the beta-ketone aldehyde, which is followed by the generation of the nucleophilic C-2 that is required for the intramolecular aldol condensation between C-2 and C-7, itself followed by dehydration and aromatization which leads to salicylaldehyde 5-deoxyaurocitrin. While the dehydrogenation of virensol D is definitely catalyzed by virD, the aldol condensation and dehydration may be uncatalyzed or assisted by virD. The short chain dehydrogenase virG then converts salicylaldehyde 5-deoxyaurocitrin into virensol B which is further hydroxylated by the cytochrome P450 monooxygenase virE to yield the hydroquinone virensol A. VirI then may oxidize virensol A to form the quinone, while virH performs the epoxidation. Finally, the two remaining short-chain dehydrogenases, virK and virL, are probably responsible for reducing the ketones to the corresponding alcohols to furnish the epoxycyclohexanol structure in trichoxide. This is Short chain dehydrogenase virK from Hypocrea virens (strain Gv29-8 / FGSC 10586) (Gliocladium virens).